The primary structure comprises 199 residues: DNA dC-&gt;dU-editing enzyme APOBEC-3A (199 aa).

In terms of domain architecture, CMP/dCMP-type deaminase spans 27–143 (GRHKTYLCYE…PLYKEALQML (117 aa)). Residue His-70 coordinates Zn(2+). Glu-72 functions as the Proton donor in the catalytic mechanism. Residues Cys-101 and Cys-106 each contribute to the Zn(2+) site.

Belongs to the cytidine and deoxycytidylate deaminase family. As to quaternary structure, interacts with AGO2. Interacts with TRIB3 (via N-terminus). It depends on Zn(2+) as a cofactor. Expressed in peripheral leukocytes with higher expression in CD14-positive phagocytic cells. Highly expressed in keratinocytes and in periphery blood monocytes. Also detected in non-lymphoid tissues including lung and adipose tissues. Found at high levels in colorectal adenocarcinoma, Burkitt's lymphoma and chronic myelogenous leukemia.

It localises to the nucleus. It is found in the cytoplasm. The catalysed reaction is a 2'-deoxycytidine in single-stranded DNA + H2O + H(+) = a 2'-deoxyuridine in single-stranded DNA + NH4(+). Its function is as follows. DNA deaminase (cytidine deaminase) with restriction activity against viruses, foreign DNA and mobility of retrotransposons. Exhibits antiviral activity against adeno-associated virus (AAV) and human T-cell leukemia virus type 1 (HTLV-1) and may inhibit the mobility of LTR and non-LTR retrotransposons. Selectively targets single-stranded DNA and can deaminate both methylcytosine and cytosine in foreign DNA. Can induce somatic hypermutation in the nuclear and mitochondrial DNA. May also play a role in the epigenetic regulation of gene expression through the process of active DNA demethylation. This chain is DNA dC-&gt;dU-editing enzyme APOBEC-3A (APOBEC3A), found in Homo sapiens (Human).